The sequence spans 421 residues: D-amino acid dehydrogenase (421 aa).

3-17 is an FAD binding site; sequence VLILGSGVIGVTSAY.

Belongs to the DadA oxidoreductase family. FAD is required as a cofactor.

It carries out the reaction a D-alpha-amino acid + A + H2O = a 2-oxocarboxylate + AH2 + NH4(+). In terms of biological role, oxidative deamination of D-amino acids. This is D-amino acid dehydrogenase from Bradyrhizobium diazoefficiens (strain JCM 10833 / BCRC 13528 / IAM 13628 / NBRC 14792 / USDA 110).